The primary structure comprises 200 residues: Recombination protein RecR (200 aa).

Residues 57 to 72 (CRQCRTLTEDELCPQC) form a C4-type zinc finger. One can recognise a Toprim domain in the interval 80-175 (TLLCVVEGPM…ITSRIAHGVP (96 aa)).

It belongs to the RecR family.

In terms of biological role, may play a role in DNA repair. It seems to be involved in an RecBC-independent recombinational process of DNA repair. It may act with RecF and RecO. In Pseudomonas fluorescens (strain ATCC BAA-477 / NRRL B-23932 / Pf-5), this protein is Recombination protein RecR.